A 93-amino-acid polypeptide reads, in one-letter code: Small ribosomal subunit protein bS20 (93 aa).

The protein belongs to the bacterial ribosomal protein bS20 family.

In terms of biological role, binds directly to 16S ribosomal RNA. This chain is Small ribosomal subunit protein bS20, found in Hydrogenobaculum sp. (strain Y04AAS1).